The following is a 483-amino-acid chain: MARAIMFQGTGSDVGKSVLVAGLCRVARNRGLKVRPFKPQNMSNNAAVSDDGGEIGRAQWLQALACGVPSSVHMNPVLLKPQTDMGSQLIVQGQVRGEARGRYYQELKPQLMAAVMESFAKVGDGADLVLVEGAGSPAEINLRAGDIANMGFAIHADVPVVLVGDIDRGGVIASLVGTHTILPQEDRAMVRGFLINKFRGDISLFDDGLAAITRFTGWRSFGVVPWLKAVSRLPAEDSVVLERAVRGDKKALIVAVPMLPRIANFDDLDPLKAEPAVEVVMVPPGSSLPADAGLVVLPGTKSTIADLLALRENGWDRELVAHVKRGGHVLGICGGFQMLGRRISDPAGIEGNVRDIEGLGLLDIETMMEPEKVVRNVEAVSLLHDEPLEGYEIHIGRTSGPDMARPFARIGDHDDGAVSPDGRIMGTYLHGVFSADRFRHHFLRALGVEGGQMNYRESVEEALDELAEGLEASLDIDGLFALA.

One can recognise a GATase cobBQ-type domain in the interval A251–F438. The active-site Nucleophile is the C333. The active site involves H430.

Belongs to the CobB/CobQ family. CobQ subfamily.

The protein operates within cofactor biosynthesis; adenosylcobalamin biosynthesis. Functionally, catalyzes amidations at positions B, D, E, and G on adenosylcobyrinic A,C-diamide. NH(2) groups are provided by glutamine, and one molecule of ATP is hydrogenolyzed for each amidation. The protein is Cobyric acid synthase of Brucella suis (strain ATCC 23445 / NCTC 10510).